The sequence spans 1338 residues: Nonribosomal peptide synthetase astA (1338 aa).

The interval 22–52 (IAVVSGDIPSPHPKNEPSQTSTLHIPRDSDL) is disordered. Residues 271–681 (FQARCRQNPS…GRKGAEVKLR (411 aa)) form an adenylation region. The region spanning 820–893 (TPVEIIIHDA…SLAEKCSAGG (74 aa)) is the Carrier domain. At serine 854 the chain carries O-(pantetheine 4'-phosphoryl)serine. Positions 949 to 1336 (TFIFRLSGPV…IIRFLDSPDS (388 aa)) are condensation.

Belongs to the NRP synthetase family.

It catalyses the reaction 7beta,14,16-trihydroxyconfertifolin + benzoate + H(+) = dideacetyl astellolide A + H2O. The enzyme catalyses 7beta,14,16-trihydroxyconfertifolin + 4-hydroxybenzoate + H(+) = dideacetyl astellolide B + H2O. Its pathway is secondary metabolite biosynthesis; terpenoid biosynthesis. Functionally, nonribosomal peptide synthetase; part of the gene cluster that mediates the biosynthesis of astellolides, drimane-type sesquiterpene esters that show antimicrobial, anti-inflammatory, and anti-tumor activities. The first step in astellolide biosynthesis is performed by the sesquiterpene cyclase astC that catalyzes the formation of drimanyl pyrophosphate from farnesyl pyrophosphate. Drimanyl pyrophosphate is then dephosphorylated by the sesquiterpene phosphatase astI to produce drimanyl monophosphate which is further dephosphorylated to drim-8-ene-11-ol by atsK. Drim-8-ene-11-ol is converted to confertifolin, probably by the cytochrome P450 monooxygenase astD and/or the dehydrogenase astE. The cytochrome P450 monooxygenases astB, astF and astJ then hydroxylate confertifolin at C6, C14, or C15 to form trihydroxy confertifolin. The nonribosomal peptide synthetase astA catalyzes ester bond formation between trihydroxy contifolin and benzoic acid (BA) or 4-hydroxy benzoic acid (4HBA), leading to the formation of dideacetyl astellolides A and B, respectively. Finally, the O-acetyltransferase astG converts dideacetyl astellolides A and B into deacetyl astellolides A and B. The polypeptide is Nonribosomal peptide synthetase astA (Aspergillus oryzae (strain ATCC 42149 / RIB 40) (Yellow koji mold)).